Consider the following 60-residue polypeptide: MFTVFLLVVLATTVVSFTSDRAFRGRNAAAKASGLVGLTDKRQECCSYPACNLDHPELCG.

The signal sequence occupies residues 1-16; it reads MFTVFLLVVLATTVVS. Positions 17 to 42 are excised as a propeptide; it reads FTSDRAFRGRNAAAKASGLVGLTDKR. The residue at position 43 (Gln43) is a Pyrrolidone carboxylic acid. 2 disulfide bridges follow: Cys45-Cys51 and Cys46-Cys59. Positions 47–49 are ser-Xaa-Pro motif, crucial for potent interaction with nAChR; sequence SYP. Cys59 is subject to Cysteine amide.

It belongs to the conotoxin A superfamily. Expressed by the venom duct.

Its subcellular location is the secreted. Alpha-conotoxins act on postsynaptic membranes, they bind to the nicotinic acetylcholine receptors (nAChR) and thus inhibit them. The protein is Alpha-conotoxin-like 289 of Conus ammiralis (Admiral cone).